The primary structure comprises 150 residues: S-protein homolog 28 (150 aa).

N122 carries N-linked (GlcNAc...) asparagine glycosylation.

The protein belongs to the plant self-incompatibility (S1) protein family.

The protein resides in the secreted. This Arabidopsis thaliana (Mouse-ear cress) protein is S-protein homolog 28.